The primary structure comprises 254 residues: 5-oxoprolinase subunit A (254 aa).

It belongs to the LamB/PxpA family. As to quaternary structure, forms a complex composed of PxpA, PxpB and PxpC.

It catalyses the reaction 5-oxo-L-proline + ATP + 2 H2O = L-glutamate + ADP + phosphate + H(+). Functionally, catalyzes the cleavage of 5-oxoproline to form L-glutamate coupled to the hydrolysis of ATP to ADP and inorganic phosphate. The protein is 5-oxoprolinase subunit A of Rhodopseudomonas palustris (strain ATCC BAA-98 / CGA009).